Here is a 328-residue protein sequence, read N- to C-terminus: Nucleotide-binding protein BLD_0430 (328 aa).

The disordered stretch occupies residues 1-35; it reads MNQQTTNRDTGEAAATNAPANSATSTSTPDNQPTP. A compositionally biased stretch (low complexity) spans 13–29; it reads AAATNAPANSATSTSTP. 46–53 is a binding site for ATP; it reads GMSGAGRS. Position 101 to 104 (101 to 104) interacts with GTP; the sequence is DVRS.

This sequence belongs to the RapZ-like family.

In terms of biological role, displays ATPase and GTPase activities. The sequence is that of Nucleotide-binding protein BLD_0430 from Bifidobacterium longum (strain DJO10A).